The sequence spans 107 residues: Large ribosomal subunit protein eL33 (107 aa).

Belongs to the eukaryotic ribosomal protein eL33 family. Component of the large ribosomal subunit. Mature ribosomes consist of a small (40S) and a large (60S) subunit. The 40S subunit contains about 32 different proteins and 1 molecule of RNA (18S). The 60S subunit contains 45 different proteins and 3 molecules of RNA (25S, 5.8S and 5S).

The protein resides in the cytoplasm. Functionally, component of the ribosome, a large ribonucleoprotein complex responsible for the synthesis of proteins in the cell. The small ribosomal subunit (SSU) binds messenger RNAs (mRNAs) and translates the encoded message by selecting cognate aminoacyl-transfer RNA (tRNA) molecules. The large subunit (LSU) contains the ribosomal catalytic site termed the peptidyl transferase center (PTC), which catalyzes the formation of peptide bonds, thereby polymerizing the amino acids delivered by tRNAs into a polypeptide chain. The nascent polypeptides leave the ribosome through a tunnel in the LSU and interact with protein factors that function in enzymatic processing, targeting, and the membrane insertion of nascent chains at the exit of the ribosomal tunnel. The polypeptide is Large ribosomal subunit protein eL33 (Candida albicans (strain SC5314 / ATCC MYA-2876) (Yeast)).